Reading from the N-terminus, the 490-residue chain is Cytochrome P450 2C28 (490 aa).

Phosphoserine is present on Ser127. Residues Lys249 and Lys375 each carry the N6-acetyllysine modification. Cys435 is a binding site for heme.

The protein belongs to the cytochrome P450 family. It depends on heme as a cofactor. In terms of tissue distribution, liver.

Its subcellular location is the endoplasmic reticulum membrane. It is found in the microsome membrane. The enzyme catalyses an organic molecule + reduced [NADPH--hemoprotein reductase] + O2 = an alcohol + oxidized [NADPH--hemoprotein reductase] + H2O + H(+). Catalyzes the N-demethylation of aminopyrine and benzphetamine, but does not catalyze the hydroxylation of tolbutamide, testosterone, and progesterone. The sequence is that of Cytochrome P450 2C28 (CYP2C28) from Mesocricetus auratus (Golden hamster).